Here is a 313-residue protein sequence, read N- to C-terminus: Protoheme IX farnesyltransferase (313 aa).

8 helical membrane-spanning segments follow: residues 34 to 54 (VIEL…RGTV), 56 to 76 (PLLI…ANTL), 105 to 125 (HALI…WWTT), 128 to 148 (LSAH…TLVL), 152 to 172 (TSQN…IGWS), 173 to 193 (AVTG…FFWT), 243 to 263 (LALA…TWFL), and 291 to 311 (YLAV…PTLF).

Belongs to the UbiA prenyltransferase family. Protoheme IX farnesyltransferase subfamily.

The protein resides in the cell membrane. The catalysed reaction is heme b + (2E,6E)-farnesyl diphosphate + H2O = Fe(II)-heme o + diphosphate. Its pathway is porphyrin-containing compound metabolism; heme O biosynthesis; heme O from protoheme: step 1/1. Its function is as follows. Converts heme B (protoheme IX) to heme O by substitution of the vinyl group on carbon 2 of heme B porphyrin ring with a hydroxyethyl farnesyl side group. This chain is Protoheme IX farnesyltransferase, found in Mycolicibacterium vanbaalenii (strain DSM 7251 / JCM 13017 / BCRC 16820 / KCTC 9966 / NRRL B-24157 / PYR-1) (Mycobacterium vanbaalenii).